Reading from the N-terminus, the 443-residue chain is tRNA-2-methylthio-N(6)-dimethylallyladenosine synthase (443 aa).

The 114-residue stretch at 1–114 (MRFYIKTFGC…VTEAVKRALQ (114 aa)) folds into the MTTase N-terminal domain. 6 residues coordinate [4Fe-4S] cluster: Cys-10, Cys-46, Cys-79, Cys-150, Cys-154, and Cys-157. Residues 136–367 (RSSKHHAWVT…MNLQKRINRK (232 aa)) enclose the Radical SAM core domain. A TRAM domain is found at 370 to 431 (ERYKGKTVRV…AGPLYGKVVW (62 aa)).

The protein belongs to the methylthiotransferase family. MiaB subfamily. Monomer. [4Fe-4S] cluster serves as cofactor.

The protein localises to the cytoplasm. It catalyses the reaction N(6)-dimethylallyladenosine(37) in tRNA + (sulfur carrier)-SH + AH2 + 2 S-adenosyl-L-methionine = 2-methylsulfanyl-N(6)-dimethylallyladenosine(37) in tRNA + (sulfur carrier)-H + 5'-deoxyadenosine + L-methionine + A + S-adenosyl-L-homocysteine + 2 H(+). Its function is as follows. Catalyzes the methylthiolation of N6-(dimethylallyl)adenosine (i(6)A), leading to the formation of 2-methylthio-N6-(dimethylallyl)adenosine (ms(2)i(6)A) at position 37 in tRNAs that read codons beginning with uridine. This Thermotoga sp. (strain RQ2) protein is tRNA-2-methylthio-N(6)-dimethylallyladenosine synthase.